An 86-amino-acid polypeptide reads, in one-letter code: Exodeoxyribonuclease 7 small subunit (86 aa).

The segment at 67–86 is disordered; it reads RVSPASGGATEAPAPAERDR.

It belongs to the XseB family. In terms of assembly, heterooligomer composed of large and small subunits.

The protein localises to the cytoplasm. The enzyme catalyses Exonucleolytic cleavage in either 5'- to 3'- or 3'- to 5'-direction to yield nucleoside 5'-phosphates.. Functionally, bidirectionally degrades single-stranded DNA into large acid-insoluble oligonucleotides, which are then degraded further into small acid-soluble oligonucleotides. The protein is Exodeoxyribonuclease 7 small subunit of Beutenbergia cavernae (strain ATCC BAA-8 / DSM 12333 / CCUG 43141 / JCM 11478 / NBRC 16432 / NCIMB 13614 / HKI 0122).